The following is an 805-amino-acid chain: Polyribonucleotide nucleotidyltransferase (805 aa).

Residues Asp491 and Asp497 each coordinate Mg(2+). Residues 558–617 (PRMESMIIDKNKIKNVIGTGGKNVREICEKTGVKIEISQDGTVMIYAVSRDAVEEAKNMI) form the KH domain. Residues 627–694 (GKVFSGVISE…DKDHVQLSMR (68 aa)) form the S1 motif domain. Positions 702–805 (DLLEHESYSS…GGGNKKPRFF (104 aa)) are disordered. Over residues 709–721 (YSSSKKNGPQSGD) the composition is skewed to polar residues.

It belongs to the polyribonucleotide nucleotidyltransferase family. Mg(2+) serves as cofactor.

The protein localises to the cytoplasm. It catalyses the reaction RNA(n+1) + phosphate = RNA(n) + a ribonucleoside 5'-diphosphate. Functionally, involved in mRNA degradation. Catalyzes the phosphorolysis of single-stranded polyribonucleotides processively in the 3'- to 5'-direction. The chain is Polyribonucleotide nucleotidyltransferase from Anaplasma marginale (strain St. Maries).